We begin with the raw amino-acid sequence, 152 residues long: Small ribosomal subunit protein uS15 (152 aa).

The segment covering Met-1–Arg-16 has biased composition (basic residues). The segment at Met-1 to Ser-21 is disordered.

This sequence belongs to the universal ribosomal protein uS15 family. Part of the 30S ribosomal subunit.

In Archaeoglobus fulgidus (strain ATCC 49558 / DSM 4304 / JCM 9628 / NBRC 100126 / VC-16), this protein is Small ribosomal subunit protein uS15.